The primary structure comprises 226 residues: UPF0758 protein PputW619_0186 (226 aa).

Positions 102-224 (ALESPSAVRR…PLSMVEQGWI (123 aa)) constitute an MPN domain. The Zn(2+) site is built by histidine 173, histidine 175, and aspartate 186. A JAMM motif motif is present at residues 173 to 186 (HNHPSGNSEPSQDD).

The protein belongs to the UPF0758 family.

This Pseudomonas putida (strain W619) protein is UPF0758 protein PputW619_0186.